A 377-amino-acid polypeptide reads, in one-letter code: Cobalt-precorrin-5B C(1)-methyltransferase (377 aa).

The tract at residues 1 to 21 (MNPVRQPYDLAAPAPNGMRRG) is disordered.

It belongs to the CbiD family.

It catalyses the reaction Co-precorrin-5B + S-adenosyl-L-methionine = Co-precorrin-6A + S-adenosyl-L-homocysteine. It participates in cofactor biosynthesis; adenosylcobalamin biosynthesis; cob(II)yrinate a,c-diamide from sirohydrochlorin (anaerobic route): step 6/10. Functionally, catalyzes the methylation of C-1 in cobalt-precorrin-5B to form cobalt-precorrin-6A. The polypeptide is Cobalt-precorrin-5B C(1)-methyltransferase (Chromobacterium violaceum (strain ATCC 12472 / DSM 30191 / JCM 1249 / CCUG 213 / NBRC 12614 / NCIMB 9131 / NCTC 9757 / MK)).